The primary structure comprises 485 residues: Bifunctional protein HldE (485 aa).

Residues 1-326 (MDFSSTRVLC…AELDESAISN (326 aa)) are ribokinase. 195–198 (NVKE) is a binding site for ATP. The active site involves D271. Positions 354–485 (FTNGCFDILH…GIVKKISTLT (132 aa)) are cytidylyltransferase.

It in the N-terminal section; belongs to the carbohydrate kinase PfkB family. In the C-terminal section; belongs to the cytidylyltransferase family. As to quaternary structure, homodimer.

It carries out the reaction D-glycero-beta-D-manno-heptose 7-phosphate + ATP = D-glycero-beta-D-manno-heptose 1,7-bisphosphate + ADP + H(+). The enzyme catalyses D-glycero-beta-D-manno-heptose 1-phosphate + ATP + H(+) = ADP-D-glycero-beta-D-manno-heptose + diphosphate. The protein operates within nucleotide-sugar biosynthesis; ADP-L-glycero-beta-D-manno-heptose biosynthesis; ADP-L-glycero-beta-D-manno-heptose from D-glycero-beta-D-manno-heptose 7-phosphate: step 1/4. It functions in the pathway nucleotide-sugar biosynthesis; ADP-L-glycero-beta-D-manno-heptose biosynthesis; ADP-L-glycero-beta-D-manno-heptose from D-glycero-beta-D-manno-heptose 7-phosphate: step 3/4. In terms of biological role, catalyzes the phosphorylation of D-glycero-D-manno-heptose 7-phosphate at the C-1 position to selectively form D-glycero-beta-D-manno-heptose-1,7-bisphosphate. Functionally, catalyzes the ADP transfer from ATP to D-glycero-beta-D-manno-heptose 1-phosphate, yielding ADP-D-glycero-beta-D-manno-heptose. The polypeptide is Bifunctional protein HldE (Granulibacter bethesdensis (strain ATCC BAA-1260 / CGDNIH1)).